Reading from the N-terminus, the 228-residue chain is UPF0758 protein SAB1521c (228 aa).

Positions 102–224 (KITQPSDVAD…FTSLVEAGYF (123 aa)) constitute an MPN domain. Residues H173, H175, and D186 each coordinate Zn(2+). Positions 173 to 186 (HNHPSGDVTPSQED) match the JAMM motif motif.

This sequence belongs to the UPF0758 family.

This chain is UPF0758 protein SAB1521c, found in Staphylococcus aureus (strain bovine RF122 / ET3-1).